We begin with the raw amino-acid sequence, 363 residues long: tRNA/tmRNA (uracil-C(5))-methyltransferase (363 aa).

Residues Gln187, Tyr215, Asn220, Glu236, and Asp296 each coordinate S-adenosyl-L-methionine. The active-site Nucleophile is Cys321. Residue Glu355 is the Proton acceptor of the active site.

The protein belongs to the class I-like SAM-binding methyltransferase superfamily. RNA M5U methyltransferase family. TrmA subfamily.

The catalysed reaction is uridine(54) in tRNA + S-adenosyl-L-methionine = 5-methyluridine(54) in tRNA + S-adenosyl-L-homocysteine + H(+). It carries out the reaction uridine(341) in tmRNA + S-adenosyl-L-methionine = 5-methyluridine(341) in tmRNA + S-adenosyl-L-homocysteine + H(+). Its function is as follows. Dual-specificity methyltransferase that catalyzes the formation of 5-methyluridine at position 54 (m5U54) in all tRNAs, and that of position 341 (m5U341) in tmRNA (transfer-mRNA). The protein is tRNA/tmRNA (uracil-C(5))-methyltransferase of Pseudomonas aeruginosa (strain LESB58).